The following is a 111-amino-acid chain: Large ribosomal subunit protein uL22 (111 aa).

It belongs to the universal ribosomal protein uL22 family. In terms of assembly, part of the 50S ribosomal subunit.

This protein binds specifically to 23S rRNA; its binding is stimulated by other ribosomal proteins, e.g. L4, L17, and L20. It is important during the early stages of 50S assembly. It makes multiple contacts with different domains of the 23S rRNA in the assembled 50S subunit and ribosome. In terms of biological role, the globular domain of the protein is located near the polypeptide exit tunnel on the outside of the subunit, while an extended beta-hairpin is found that lines the wall of the exit tunnel in the center of the 70S ribosome. The chain is Large ribosomal subunit protein uL22 from Xanthomonas oryzae pv. oryzae (strain PXO99A).